The following is a 102-amino-acid chain: Alpha-ketoglutarate dehydrogenase component 4 (102 aa).

Gly2 is modified (N-acetylglycine). The residue at position 4 (Lys4) is an N6-succinyllysine. The interval 23-70 (KFPNRRDKPKLSASEALGSAALPSHSSAISQHSKGSTSPDLLMHQGPP) is disordered. Residues 33–46 (LSASEALGSAALPS) show a composition bias toward low complexity. Residues 47–61 (HSSAISQHSKGSTSP) are compositionally biased toward polar residues. Ser48, Ser60, and Ser89 each carry phosphoserine.

This sequence belongs to the alpha-ketoglutarate dehydrogenase component 4 family. In terms of assembly, component of the 2-oxoglutarate dehydrogenase complex (OGDHC), composed of OGDH (2-oxoglutarate dehydrogenase; also called E1 subunit), DLST (dihydrolipoamide succinyltransferase; also called E2 subunit) and DLD (dihydrolipoamide dehydrogenase; also called E3 subunit), and the assembly factor KGD4. Within OGDHC complex, interacts (via N-terminus) with E3 subunit and (via C-terminus) with E2 subunit.

Its subcellular location is the mitochondrion. Its function is as follows. Molecular adapter that is necessary to form a stable 2-oxoglutarate dehydrogenase enzyme complex (OGDHC). Enables the specific recruitment of E3 subunit to E2 subunit in the 2-oxoglutarate dehydrogenase complex (OGDHC). The polypeptide is Alpha-ketoglutarate dehydrogenase component 4 (Mus musculus (Mouse)).